Reading from the N-terminus, the 497-residue chain is Amino acid oxidase fsqB (497 aa).

Residues Val-14, Phe-15, Asp-38, Asn-53, Ala-57, Asn-58, Arg-63, Val-64, and Val-211 each contribute to the FAD site. At Cys-414 the chain carries S-8alpha-FAD cysteine. Positions 447 and 448 each coordinate FAD.

Belongs to the MSOX/MTOX family. In terms of assembly, dimer. Requires FAD as cofactor.

The catalysed reaction is (2S,4S,5S)-2-amino-6-(3,4-dihydroxyphenyl)-4-hydroxy-5-(methylamino)hexanoyl-[peptidyl-carrier protein] + O2 = (2S,4S)-2-amino-4-[(3S)-7,8-dihydroxy-1,2,3,4-tetrahydroisoquinolin-3-yl]-4-hydroxybutanoyl-[peptidyl-carrier protein] + H2O2. It catalyses the reaction N-methyl-L-dopa + O2 = (3S)-7,8-dihydroxy-1,2,3,4-tetrahydroisoquinoline-3-carboxylate + H2O2. The enzyme catalyses N-methyl-D-dopa + O2 = (3R)-7,8-dihydroxy-1,2,3,4-tetrahydroisoquinoline-3-carboxylate + H2O2. It participates in secondary metabolite biosynthesis. Amino acid oxidase; part of the gene cluster that mediates the biosynthesis of the isoquinoline alkaloids fumisoquin A, fumisoquin B and fumisoquin C; as well as small amounts of fumipyrrole as a shunt metabolite. The products of the cluster lead to a brown coloration and are important for growth and conidiation. The nonribosomal peptide synthetase-like protein fsqF, which lacks a canonical condensation domain, is required for addition of a serine-derived dehydroalanine moiety to activated tyrosine but is not essential for the subsequent steps leading to isoquinoline formation. A different enzyme, most likely the ATP-grasp enzyme fsqD, is responsible for activation of tyrosine. Three additional enzymes encoded by the fsq cluster, the N-methyltransferase fsqC, the phenol 2-monooxygenase fsqG and the FAD-dependent oxidase fsqB, catalyze the formation of the isoquinoline ring system in the fumisoquins. FsqB converts the fspF thiolation domain-bound (2S,4S,5S)-2-amino-6-(3,4-dihydroxyphenyl)-4-hydroxy-5-(methylamino)hexanoyl into isoquinoline. The cyclization most likely proceeds via a two-step mechanism, beginning with FAD-dependent oxidation of the methyl group to an iminium species followed by electrophilic attack on the deprotonated phenol. In terms of biological role, is able to convert N-methyl-3,4-dihydroxy-DL-phenylalanine (N-methyl-DOPA) directly into cyclic isoquinoline, in vitro. The absence of the meta-hydroxyl group, as in L-N-methyl-tyrosine, leads to a 25-fold lower rate of reduction and the formation of the demethylated product L-tyrosine, instead of a cyclic product. Does not accept the D-stereoisomer of N-methyltyrosine, in contrast to N-methyl-DOPA, for which both stereoisomers are oxidized with similar rates. This is Amino acid oxidase fsqB from Aspergillus fumigatus (strain ATCC MYA-4609 / CBS 101355 / FGSC A1100 / Af293) (Neosartorya fumigata).